We begin with the raw amino-acid sequence, 257 residues long: Transcription factor GHD7 (257 aa).

The residue at position 68 (Ser-68) is a Phosphoserine; by CK1. The CCT domain occupies 190–232; sequence REAKLMRYKEKRKKRCYEKQIRYASRKAYAEMRPRVRGRFAKE. A Nuclear localization signal motif is present at residues 198 to 204; sequence KEKRKKR. The disordered stretch occupies residues 226–245; it reads RGRFAKEPDQEAVAPPSTYV.

Interacts with HD16/EL1. Post-translationally, phosphorylated at Ser-68 by HD16/EL1, a casein kinase 1. As to expression, expressed in the apical meristem, developing leaves, leaf sheaths of young seedling, root meristem, epidermal layer of developing stems and branch-primordia of developing panicles.

It is found in the nucleus. Its function is as follows. Probable transcription factor involved in the regulation of flowering time under long day (LD) conditions. Plays a major role as repressor of flowering. Controls flowering time by negatively regulating the expression of EHD1 and HD3A. This chain is Transcription factor GHD7, found in Oryza sativa subsp. japonica (Rice).